The following is a 428-amino-acid chain: Kynureninase (428 aa).

Pyridoxal 5'-phosphate-binding positions include Thr104, Thr105, 132–135 (FPSD), Asp213, His216, and Tyr238. The residue at position 239 (Lys239) is an N6-(pyridoxal phosphate)lysine. Pyridoxal 5'-phosphate-binding residues include Trp267 and Thr295.

This sequence belongs to the kynureninase family. Homodimer. The cofactor is pyridoxal 5'-phosphate.

The enzyme catalyses L-kynurenine + H2O = anthranilate + L-alanine + H(+). It catalyses the reaction 3-hydroxy-L-kynurenine + H2O = 3-hydroxyanthranilate + L-alanine + H(+). It participates in amino-acid degradation; L-kynurenine degradation; L-alanine and anthranilate from L-kynurenine: step 1/1. The protein operates within cofactor biosynthesis; NAD(+) biosynthesis; quinolinate from L-kynurenine: step 2/3. Its function is as follows. Catalyzes the cleavage of L-kynurenine (L-Kyn) and L-3-hydroxykynurenine (L-3OHKyn) into anthranilic acid (AA) and 3-hydroxyanthranilic acid (3-OHAA), respectively. The sequence is that of Kynureninase from Bacillus mycoides (strain KBAB4) (Bacillus weihenstephanensis).